Consider the following 302-residue polypeptide: Light-independent protochlorophyllide reductase iron-sulfur ATP-binding protein (302 aa).

The span at 1–10 shows a compositional bias: polar residues; sequence MSTATISPSQ. Residues 1–21 form a disordered region; it reads MSTATISPSQIGRGARPDGEG. Residues 46–51 and K75 contribute to the ATP site; that span reads GIGKST. S50 contacts Mg(2+). [4Fe-4S] cluster-binding residues include C131 and C165. Residues 216 to 217 and 240 to 242 contribute to the ATP site; these read NR and PAL.

This sequence belongs to the NifH/BchL/ChlL family. Homodimer. Protochlorophyllide reductase is composed of three subunits; BchL, BchN and BchB. [4Fe-4S] cluster is required as a cofactor.

It carries out the reaction chlorophyllide a + oxidized 2[4Fe-4S]-[ferredoxin] + 2 ADP + 2 phosphate = protochlorophyllide a + reduced 2[4Fe-4S]-[ferredoxin] + 2 ATP + 2 H2O. The protein operates within porphyrin-containing compound metabolism; bacteriochlorophyll biosynthesis (light-independent). In terms of biological role, component of the dark-operative protochlorophyllide reductase (DPOR) that uses Mg-ATP and reduced ferredoxin to reduce ring D of protochlorophyllide (Pchlide) to form chlorophyllide a (Chlide). This reaction is light-independent. The L component serves as a unique electron donor to the NB-component of the complex, and binds Mg-ATP. This is Light-independent protochlorophyllide reductase iron-sulfur ATP-binding protein from Rubrivivax gelatinosus (strain NBRC 100245 / IL144).